The chain runs to 154 residues: Superoxide dismutase [Cu-Zn] (154 aa).

Residues histidine 47, histidine 49, and histidine 64 each coordinate Cu cation. Cysteine 58 and cysteine 147 are disulfide-bonded. Zn(2+) contacts are provided by histidine 64, histidine 72, histidine 81, and aspartate 84. Histidine 121 contributes to the Cu cation binding site. Arginine 144 serves as a coordination point for substrate.

This sequence belongs to the Cu-Zn superoxide dismutase family. In terms of assembly, homodimer. Cu cation is required as a cofactor. The cofactor is Zn(2+).

The protein resides in the cytoplasm. It catalyses the reaction 2 superoxide + 2 H(+) = H2O2 + O2. In terms of biological role, destroys radicals which are normally produced within the cells and which are toxic to biological systems. This Podospora anserina (Pleurage anserina) protein is Superoxide dismutase [Cu-Zn] (SOD1).